The sequence spans 206 residues: Thymidylate kinase (206 aa).

10-17 (GNDGSGKS) serves as a coordination point for ATP.

It belongs to the thymidylate kinase family.

The catalysed reaction is dTMP + ATP = dTDP + ADP. Its function is as follows. Phosphorylation of dTMP to form dTDP in both de novo and salvage pathways of dTTP synthesis. The sequence is that of Thymidylate kinase from Caldicellulosiruptor saccharolyticus (strain ATCC 43494 / DSM 8903 / Tp8T 6331).